A 428-amino-acid chain; its full sequence is Phosphomethylpyrimidine synthase 2 (428 aa).

Residues methionine 94, tyrosine 123, histidine 162, 184–186, 225–228, and glutamate 264 contribute to the substrate site; these read SRG and NGMR. Residue histidine 268 participates in Zn(2+) binding. Tyrosine 291 contributes to the substrate binding site. A Zn(2+)-binding site is contributed by histidine 332. 3 residues coordinate [4Fe-4S] cluster: cysteine 408, cysteine 411, and cysteine 415.

Belongs to the ThiC family. The cofactor is [4Fe-4S] cluster.

The catalysed reaction is 5-amino-1-(5-phospho-beta-D-ribosyl)imidazole + S-adenosyl-L-methionine = 4-amino-2-methyl-5-(phosphooxymethyl)pyrimidine + CO + 5'-deoxyadenosine + formate + L-methionine + 3 H(+). It functions in the pathway cofactor biosynthesis; thiamine diphosphate biosynthesis. In terms of biological role, catalyzes the synthesis of the hydroxymethylpyrimidine phosphate (HMP-P) moiety of thiamine from aminoimidazole ribotide (AIR) in a radical S-adenosyl-L-methionine (SAM)-dependent reaction. This chain is Phosphomethylpyrimidine synthase 2, found in Methanosarcina acetivorans (strain ATCC 35395 / DSM 2834 / JCM 12185 / C2A).